Consider the following 255-residue polypeptide: tRNA (guanine-N(7)-)-methyltransferase (255 aa).

Positions 1–37 (MTAAASDPHNPRSSADDTASPRCESGQGSFFGRRKGH) are disordered. The S-adenosyl-L-methionine site is built by Glu-80, Glu-105, Asp-132, and Asp-154. Residue Asp-154 is part of the active site. Substrate contacts are provided by Lys-158 and Asp-190.

The protein belongs to the class I-like SAM-binding methyltransferase superfamily. TrmB family.

It carries out the reaction guanosine(46) in tRNA + S-adenosyl-L-methionine = N(7)-methylguanosine(46) in tRNA + S-adenosyl-L-homocysteine. It functions in the pathway tRNA modification; N(7)-methylguanine-tRNA biosynthesis. In terms of biological role, catalyzes the formation of N(7)-methylguanine at position 46 (m7G46) in tRNA. This chain is tRNA (guanine-N(7)-)-methyltransferase, found in Nitrobacter hamburgensis (strain DSM 10229 / NCIMB 13809 / X14).